A 266-amino-acid polypeptide reads, in one-letter code: tRNA (guanine-N(7)-)-methyltransferase (266 aa).

Residues 1-32 (MSDHGRMHIPESGLATPAAAHSDDPPHPHFNR) form a disordered region. S-adenosyl-L-methionine contacts are provided by Glu96, Glu121, Asp148, and Asp171. Asp171 is an active-site residue. Residues Lys175 and Asp207 each contribute to the substrate site.

It belongs to the class I-like SAM-binding methyltransferase superfamily. TrmB family.

It catalyses the reaction guanosine(46) in tRNA + S-adenosyl-L-methionine = N(7)-methylguanosine(46) in tRNA + S-adenosyl-L-homocysteine. It functions in the pathway tRNA modification; N(7)-methylguanine-tRNA biosynthesis. Catalyzes the formation of N(7)-methylguanine at position 46 (m7G46) in tRNA. This Mycolicibacterium vanbaalenii (strain DSM 7251 / JCM 13017 / BCRC 16820 / KCTC 9966 / NRRL B-24157 / PYR-1) (Mycobacterium vanbaalenii) protein is tRNA (guanine-N(7)-)-methyltransferase.